The sequence spans 496 residues: Putative ammonium transporter 1 member 5 (496 aa).

Transmembrane regions (helical) follow at residues 50–70, 85–105, 131–151, 156–176, 202–222, 246–266, 284–306, 314–334, 336–356, 369–389, and 422–442; these read LLFS…LCAG, VLDA…FAFG, FFLY…GSIA, FVAY…VVSH, FAGS…GALI, LVVL…PGSF, GIGR…TLFG, WNVT…TAGC, VVDP…LIGC, LEAA…VGLF, and LVQI…LFFI. Ser485 bears the Phosphoserine mark.

Belongs to the ammonia transporter channel (TC 1.A.11.2) family.

Its subcellular location is the membrane. In terms of biological role, involved in ammonium transport. This Arabidopsis thaliana (Mouse-ear cress) protein is Putative ammonium transporter 1 member 5 (AMT1-5).